Consider the following 75-residue polypeptide: uncharacterized protein (75 aa).

This is an uncharacterized protein from Vaccinia virus (strain Copenhagen) (VACV).